A 127-amino-acid polypeptide reads, in one-letter code: Large ribosomal subunit protein bL21 (127 aa).

The tract at residues 102–127 (TDNAKPTKGPRPKKAKAEAPAADAAE) is disordered.

Belongs to the bacterial ribosomal protein bL21 family. Part of the 50S ribosomal subunit. Contacts protein L20.

In terms of biological role, this protein binds to 23S rRNA in the presence of protein L20. The sequence is that of Large ribosomal subunit protein bL21 from Bradyrhizobium sp. (strain BTAi1 / ATCC BAA-1182).